We begin with the raw amino-acid sequence, 736 residues long: Zinc finger CCCH domain-containing protein 14 (736 aa).

M1 is modified (N-acetylmethionine). Residues T77–S103 are compositionally biased toward polar residues. Positions T77 to T153 are disordered. S85 is subject to Phosphoserine. Residues K99, K139, K175, and K198 each participate in a glycyl lysine isopeptide (Lys-Gly) (interchain with G-Cter in SUMO2) cross-link. Residues R123–D148 show a composition bias toward basic and acidic residues. Residue S240 is modified to Phosphoserine. Glycyl lysine isopeptide (Lys-Gly) (interchain with G-Cter in SUMO2) cross-links involve residues K245, K283, and K295. The disordered stretch occupies residues F308–A350. Phosphoserine is present on residues S309, S327, and S343. K357 bears the N6-acetyllysine; alternate mark. K357 participates in a covalent cross-link: Glycyl lysine isopeptide (Lys-Gly) (interchain with G-Cter in SUMO2); alternate. A compositionally biased stretch (polar residues) spans T367 to T380. Residues T367–R386 form a disordered region. A Glycyl lysine isopeptide (Lys-Gly) (interchain with G-Cter in SUMO2) cross-link involves residue K378. Phosphoserine is present on residues S390 and S409. The segment at Q400–D420 is disordered. Glycyl lysine isopeptide (Lys-Gly) (interchain with G-Cter in SUMO2) cross-links involve residues K413 and K489. Phosphoserine is present on residues S498, S515, S527, and S620. C3H1-type zinc fingers lie at residues E595 to S620, P621 to N640, C641 to H656, C682 to K699, and C701 to I719.

This sequence belongs to the ZC3H14 family. Homodimer; facilitating circular RNAs (circRNAs) formation. Associates with the spliceosome. Interacts with HOOK2. Interacts with ZFC3H1 in a RNase-sensitive manner.

It localises to the nucleus speckle. Functionally, RNA-binding protein involved in the biogenesis of circular RNAs (circRNAs), which are produced by back-splicing circularization of pre-mRNAs. Acts by binding to both exon-intron boundary and 3'-UTR of pre-mRNAs to promote circRNA biogenesis through dimerization and the association with the spliceosome. Required for spermatogenesis via involvement in circRNA biogenesis. Regulates the pre-mRNA processing of ATP5MC1; preventing its degradation. Also binds the poly(A) tail of mRNAs; controlling poly(A) length in neuronal cells. This Rattus norvegicus (Rat) protein is Zinc finger CCCH domain-containing protein 14.